The sequence spans 150 residues: Large ribosomal subunit protein uL13 (150 aa).

Positions 130-150 are disordered; the sequence is EHPHAAQQPKTLQLDPAASAQ.

The protein belongs to the universal ribosomal protein uL13 family. As to quaternary structure, part of the 50S ribosomal subunit.

Functionally, this protein is one of the early assembly proteins of the 50S ribosomal subunit, although it is not seen to bind rRNA by itself. It is important during the early stages of 50S assembly. The protein is Large ribosomal subunit protein uL13 of Synechococcus sp. (strain CC9311).